The primary structure comprises 197 residues: Probable chemoreceptor glutamine deamidase CheD 2 (197 aa).

It belongs to the CheD family.

It catalyses the reaction L-glutaminyl-[protein] + H2O = L-glutamyl-[protein] + NH4(+). Its function is as follows. Probably deamidates glutamine residues to glutamate on methyl-accepting chemotaxis receptors (MCPs), playing an important role in chemotaxis. In Dechloromonas aromatica (strain RCB), this protein is Probable chemoreceptor glutamine deamidase CheD 2.